The following is a 282-amino-acid chain: Bifunctional protein FolD (282 aa).

Residues 163 to 165 (NRS), T188, and I229 each bind NADP(+).

It belongs to the tetrahydrofolate dehydrogenase/cyclohydrolase family. Homodimer.

It carries out the reaction (6R)-5,10-methylene-5,6,7,8-tetrahydrofolate + NADP(+) = (6R)-5,10-methenyltetrahydrofolate + NADPH. The enzyme catalyses (6R)-5,10-methenyltetrahydrofolate + H2O = (6R)-10-formyltetrahydrofolate + H(+). Its pathway is one-carbon metabolism; tetrahydrofolate interconversion. Its function is as follows. Catalyzes the oxidation of 5,10-methylenetetrahydrofolate to 5,10-methenyltetrahydrofolate and then the hydrolysis of 5,10-methenyltetrahydrofolate to 10-formyltetrahydrofolate. The sequence is that of Bifunctional protein FolD from Malacoplasma penetrans (strain HF-2) (Mycoplasma penetrans).